A 1207-amino-acid polypeptide reads, in one-letter code: MIDVNNFHYMKIGLASPEKIRSWSFGEVKKPETINYRTLKPEKDGLFCERIFGPTKDWECSCGKYKRVRYKGMVCDRCGVEVTKSKVRRERMGHIELAAPVSHIWYFKGIPSRMGLLLDMSPRALEEVIYFASYVVVDPGPTGLEKKTLLSEAEFRDYYDKYPGQFVAKMGAEGIKDLLEEIDLDEELKLLRDELESATGQRLTRAIKRLEVVESFRNSGNKPSWMILDVLPIIPPEIRPMVQLDGGRFATSDLNDLYRRVINRNNRLKRLLDLGAPGIIVQNEKRMLQEAVDALIDNGRRGRPVTGPGNRPLKSLSHMLKGKQGRFRQNLLGKRVDYSGRSVIAVGPSLKMYQCGLPKEMALELFKPFVMKELVQREIATNIKNAKSKIERMDDEVWDVLEEVIREHPVLLNRAPTLHRLGIQAFEPTLVEGRAIRLHPLVTTAYNADFDGDQMAVHVPLSKEAQAEARMLMLAAQNILNPKDGKPVVTPSQDMVLGNYYLTLERKDAVNTGAIFNNTNEVLKAYANGFVHLHTRIGVHASSFNNPTFTEEQNKKILATSVGKIIFNEIIPDSFAYINEPTQENLERKTPNRYFIDPTTLGEGGLKEYFENEELIEPFNKKFLGNIIAEVFNRFSITDTSMMLDRMKDLGFKFSSKAGITVGVADIVVLPDKQQILDEHEKLVDRITKQFNRGLITEEERYNAVVEIWTDAKDQIQGELMQSLDKTNPIFMMSDSGARGNASNFTQLAGMRGLMAAPSGKIIELPITSSFREGLTVLEYFISTHGARKGLADTALKTADSGYLTRRLVDVAQDVIVREEDCGTDRGLLVSDIKEGTEMIEPFIERIEGRYSKETIRHPETDEIIIRPDELITPEIAKKITDAGIEQMYIRSAFTCNARHGVCEKCYGKNLATGEKVEVGEAVGTIAAQSIGEPGTQLTMRTFHTGGVAGSDITQGLPRIQEIFEARNPKGQAVITEIEGVVEDIKLAKDRQQEIVVKGANETRSYLASGTSRIIVEIGQPVQRGEVLTEGSIEPKNYLSVAGLNATESYLLKEVQKVYRMQGVEIDDKHVEVMVRQMLRKVRIIEAGDTKLLPGSLVDIHNFTDANREAFKHRKRPATAKPVLLGITKASLETESFLSAASFQETTRVLTDAAIKGKRDDLLGLKENVIIGKLIPAGTGMRRYSDVKYEKTAKPVAEVESQTEVTE.

Zn(2+) contacts are provided by C60, C62, C75, and C78. Mg(2+) is bound by residues D449, D451, and D453. Zn(2+) is bound by residues C822, C896, C903, and C906.

This sequence belongs to the RNA polymerase beta' chain family. The RNAP catalytic core consists of 2 alpha, 1 beta, 1 beta' and 1 omega subunit. When a sigma factor is associated with the core the holoenzyme is formed, which can initiate transcription. Mg(2+) is required as a cofactor. Requires Zn(2+) as cofactor.

It carries out the reaction RNA(n) + a ribonucleoside 5'-triphosphate = RNA(n+1) + diphosphate. In terms of biological role, DNA-dependent RNA polymerase catalyzes the transcription of DNA into RNA using the four ribonucleoside triphosphates as substrates. The chain is DNA-directed RNA polymerase subunit beta' from Staphylococcus aureus (strain NCTC 8325 / PS 47).